A 172-amino-acid polypeptide reads, in one-letter code: Acetolactate synthase small subunit (172 aa).

One can recognise an ACT domain in the interval 4–79; that stretch reads IITLTVVNRS…DVLKVTDITN (76 aa).

This sequence belongs to the acetolactate synthase small subunit family. In terms of assembly, dimer of large and small chains.

It carries out the reaction 2 pyruvate + H(+) = (2S)-2-acetolactate + CO2. It participates in amino-acid biosynthesis; L-isoleucine biosynthesis; L-isoleucine from 2-oxobutanoate: step 1/4. It functions in the pathway amino-acid biosynthesis; L-valine biosynthesis; L-valine from pyruvate: step 1/4. The sequence is that of Acetolactate synthase small subunit (ilvH) from Bacillus subtilis (strain 168).